The sequence spans 141 residues: BPTI/Kunitz domain-containing protein 2 (141 aa).

The N-terminal stretch at 1 to 23 is a signal peptide; the sequence is MLASCHITSLSGILLLLCVQCSA. 2 consecutive BPTI/Kunitz inhibitor domains span residues 30–79 and 84–136; these read CGDV…ERRC and CNQT…FNLC. Intrachain disulfides connect C30-C79, C40-C62, C54-C75, C84-C136, C94-C119, and C111-C132.

In terms of tissue distribution, prismatic layer of shell (at protein level).

It localises to the secreted. This chain is BPTI/Kunitz domain-containing protein 2, found in Margaritifera margaritifera (Freshwater pearl mussel).